Consider the following 130-residue polypeptide: Small ribosomal subunit protein uS8 (130 aa).

It belongs to the universal ribosomal protein uS8 family. In terms of assembly, part of the 30S ribosomal subunit. Contacts proteins S5 and S12.

Functionally, one of the primary rRNA binding proteins, it binds directly to 16S rRNA central domain where it helps coordinate assembly of the platform of the 30S subunit. This chain is Small ribosomal subunit protein uS8, found in Shewanella loihica (strain ATCC BAA-1088 / PV-4).